The chain runs to 351 residues: MNRIFFILVAAGVPLSVIGSLMHWPSAVLFAVYCVTIIALASYMGRATESLSIIAGPRIGGLLNATFGNAVELIISLFALKEGLTGIVLASLTGSVLGNLLLVAGLSFFVGGLKYKRQEFNIHDARHNSGLLIFAIIVAFVIPEVFSVGMGNASKLNLSIGISIIMILLYVAALYFKLVTHRGVYQPNNAAQTEEEEEPEWSGKVATIVLFAATIVVAYISENLVHTFHSVAEQFGWSELFIGVIIVAIVGNAAEHASAIIMAFKNKMDIAVEIAVGSTLQIAMFVAPVLVICSIFFPTSMPLVFTLPELVAMVSAVLLMIAISNDGDSNWFEGATLLAAYVIMAIGFFLL.

A run of 11 helical transmembrane segments spans residues 4-24 (IFFI…LMHW), 25-45 (PSAV…SYMG), 59-79 (IGGL…SLFA), 86-106 (GIVL…VAGL), 130-150 (GLLI…SVGM), 156-176 (LNLS…ALYF), 205-225 (VATI…ENLV), 241-261 (FIGV…SAII), 282-302 (IAMF…TSMP), 303-323 (LVFT…MIAI), and 331-351 (WFEG…FFLL).

It belongs to the Ca(2+):cation antiporter (CaCA) (TC 2.A.19) family. Cation/proton exchanger (CAX) subfamily. As to quaternary structure, homotrimer.

The protein resides in the cell membrane. Calcium efflux is tightly regulated by intracellular pH. Ca(+)/H(+) antiporter that extrudes calcium in exchange for external protons. Does not transport sodium or potassium. This is Ca(2+)/H(+) antiporter ChaA (chaA) from Bacillus subtilis (strain 168).